A 396-amino-acid chain; its full sequence is 3-amino-4-hydroxybenzoic acid synthase (396 aa).

Residues 1-29 form a disordered region; the sequence is MSSSPSPSPSSSSSSSASSSASSSPSSSS.

The protein belongs to the archaeal-type DHQ synthase family. GriH subfamily. As to quaternary structure, monomer. Mn(2+) serves as cofactor.

It catalyses the reaction 2-amino-4,5-dihydroxy-6-oxo-7-(phosphooxy)heptanoate = 3-amino-4-hydroxybenzoate + phosphate + 2 H2O + H(+). Its function is as follows. Catalyzes the cyclization of 2-amino-4,5-dihydroxy-6-one-heptanoic acid-7-phosphate to yield 3-amino-4-hydroxybenzoic acid (3,4-AHBA). The protein is 3-amino-4-hydroxybenzoic acid synthase (griH) of Streptomyces griseus subsp. griseus (strain JCM 4626 / CBS 651.72 / NBRC 13350 / KCC S-0626 / ISP 5235).